Reading from the N-terminus, the 168-residue chain is G/U mismatch-specific DNA glycosylase (168 aa).

Belongs to the uracil-DNA glycosylase (UDG) superfamily. TDG/mug family. In terms of assembly, binds DNA as a monomer.

The protein localises to the cytoplasm. The catalysed reaction is Specifically hydrolyzes mismatched double-stranded DNA and polynucleotides, releasing free uracil.. Its function is as follows. Excises ethenocytosine and uracil, which can arise by alkylation or deamination of cytosine, respectively, from the corresponding mispairs with guanine in ds-DNA. It is capable of hydrolyzing the carbon-nitrogen bond between the sugar-phosphate backbone of the DNA and the mispaired base. The complementary strand guanine functions in substrate recognition. Required for DNA damage lesion repair in stationary-phase cells. This Escherichia coli O139:H28 (strain E24377A / ETEC) protein is G/U mismatch-specific DNA glycosylase.